A 350-amino-acid chain; its full sequence is Thioredoxin-like fold domain-containing protein MRL7L, chloroplastic (350 aa).

The transit peptide at 1 to 48 directs the protein to the chloroplast; that stretch reads MILPFSTQFTCPVQDNGFSPSSLLSHCKRDRFEVTSLRYDSFGSVKTA. Disordered stretches follow at residues 78–107 and 182–201; these read KKEEDSDSEDEEDEVKEETFGGKEASLDDP and NEKKEEEDDDEDSEGDDSEK. Acidic residues-rich tracts occupy residues 82–93 and 186–200; these read DSDSEDEEDEVK and EEEDDDEDSEGDDSE.

It is found in the plastid. Its subcellular location is the chloroplast stroma. The protein resides in the nucleus. Functionally, plays an essential role in early steps of chloroplast development. Involved in the regulation of plastid gene expression. Required for the proper function of the plastid transcriptional machinery and protein accumulation in thylakoid membranes. May function as molecular chaperone to ensure proper organization of the nucleoids in chloroplasts. Is a necessary component of phytochrome signaling for photosynthesis-associated plastid-encoded genes (PhAPGs) activation. Mediates the degradation of two repressors of chloroplast biogenesis, PIF1 and PIF3 in nucleus. Promotes the assembly of the plastid-encoded RNA polymerase (PEP) complex for PhAPG transcription in plastids. In Arabidopsis thaliana (Mouse-ear cress), this protein is Thioredoxin-like fold domain-containing protein MRL7L, chloroplastic.